Consider the following 543-residue polypeptide: Acrosin-binding protein (543 aa).

An N-terminal signal peptide occupies residues 1–25 (MRKPAAGFLPSLLKVLLLPLAPAAA). A pro-ACR binding region spans residues 26–106 (QDSTQASTPG…ASWFESFCQF (81 aa)). The propeptide at 26-273 (QDSTQASTPG…NPSSFAPRVR (248 aa)) is removed in mature form. Residues 185–272 (SLGGQEQAPE…SNPSSFAPRV (88 aa)) form a disordered region. The span at 192–220 (APEHKQEQGVEHRQEPTQEHKQEEGQKQE) shows a compositional bias: basic and acidic residues. Acidic residues predominate over residues 221–231 (EQEEEQEEEGK). Over residues 232-243 (QEEGQGTKEGRE) the composition is skewed to basic and acidic residues. The tract at residues 319–427 (LPHTEALLVL…NQVGSPESGR (109 aa)) is pro-ACR binding.

In terms of assembly, binds proacrosin (pro-ACR). Does not bind the mature form of ACR. Post-translationally, phosphorylated on Tyr residues in capacitated sperm. The N-terminus is blocked. In terms of processing, synthesized as a 60-kDa precursor, the 32-kDa mature form is post-translationally produced by the removal of the N-terminal half of the precursor during sperm maturation in the testis and/or epididymis. In terms of tissue distribution, expression restricted to testis in normal tissue. Expressed in a wide spectrum of cancers, including bladder, breast, liver, lung and colon cancers.

The protein resides in the secreted. The protein localises to the cytoplasmic vesicle. Its subcellular location is the secretory vesicle. It localises to the acrosome. Acrosomal protein that maintains proacrosin (pro-ACR) as an enzymatically inactive zymogen in the acrosome. Involved also in the acrosome formation. In Homo sapiens (Human), this protein is Acrosin-binding protein.